We begin with the raw amino-acid sequence, 101 residues long: Urease subunit beta (101 aa).

Belongs to the urease beta subunit family. In terms of assembly, heterotrimer of UreA (gamma), UreB (beta) and UreC (alpha) subunits. Three heterotrimers associate to form the active enzyme.

The protein resides in the cytoplasm. The enzyme catalyses urea + 2 H2O + H(+) = hydrogencarbonate + 2 NH4(+). It participates in nitrogen metabolism; urea degradation; CO(2) and NH(3) from urea (urease route): step 1/1. This is Urease subunit beta from Burkholderia multivorans (strain ATCC 17616 / 249).